A 239-amino-acid chain; its full sequence is Wilms tumor protein homolog (239 aa).

A 9aaTAD motif is present at residues Met-43 to Gly-51. 3 consecutive C2H2-type zinc fingers follow at residues Phe-113–His-137, Tyr-143–His-167, and Phe-173–His-195. Important for interaction with target DNA stretches follow at residues Ser-157–Lys-171 and Ser-183–His-191. A KTS motif motif is present at residues Lys-198 to Ser-200. Residues Phe-204–His-228 form a C2H2-type 4 zinc finger. Lys-234 is covalently cross-linked (Glycyl lysine isopeptide (Lys-Gly) (interchain with G-Cter in SUMO2)).

It belongs to the EGR C2H2-type zinc-finger protein family. As to quaternary structure, interacts with ZNF224 via the zinc-finger region. Interacts with WTAP, AMER1 and SRY. Homodimer. Interacts with WTIP. Interacts with actively translating polysomes. Detected in nuclear ribonucleoprotein (mRNP) particles. Interacts with U2AF2. Interacts with HNRNPU via the zinc-finger region. Interacts with CITED2.

The protein resides in the nucleus speckle. Its subcellular location is the nucleus. It is found in the nucleoplasm. It localises to the cytoplasm. In terms of biological role, transcription factor that plays an important role in cellular development and cell survival. Recognizes and binds to the DNA sequence 5'-GCG(T/G)GGGCG-3'. Regulates the expression of numerous target genes, including EPO. Plays an essential role for development of the urogenital system. It has a tumor suppressor as well as an oncogenic role in tumor formation. Function may be isoform-specific: isoforms lacking the KTS motif may act as transcription factors. Isoforms containing the KTS motif may bind mRNA and play a role in mRNA metabolism or splicing. In Sminthopsis macroura (Stripe-faced dunnart), this protein is Wilms tumor protein homolog (WT1).